The following is a 175-amino-acid chain: ATP synthase subunit delta (175 aa).

The protein belongs to the ATPase delta chain family. In terms of assembly, F-type ATPases have 2 components, F(1) - the catalytic core - and F(0) - the membrane proton channel. F(1) has five subunits: alpha(3), beta(3), gamma(1), delta(1), epsilon(1). F(0) has three main subunits: a(1), b(2) and c(10-14). The alpha and beta chains form an alternating ring which encloses part of the gamma chain. F(1) is attached to F(0) by a central stalk formed by the gamma and epsilon chains, while a peripheral stalk is formed by the delta and b chains.

It localises to the cell membrane. Functionally, f(1)F(0) ATP synthase produces ATP from ADP in the presence of a proton or sodium gradient. F-type ATPases consist of two structural domains, F(1) containing the extramembraneous catalytic core and F(0) containing the membrane proton channel, linked together by a central stalk and a peripheral stalk. During catalysis, ATP synthesis in the catalytic domain of F(1) is coupled via a rotary mechanism of the central stalk subunits to proton translocation. Its function is as follows. This protein is part of the stalk that links CF(0) to CF(1). It either transmits conformational changes from CF(0) to CF(1) or is implicated in proton conduction. The protein is ATP synthase subunit delta of Stenotrophomonas maltophilia (strain K279a).